Reading from the N-terminus, the 430-residue chain is Adenylosuccinate synthetase (430 aa).

Residues 12–18 (GDEGKGK) and 40–42 (GHT) contribute to the GTP site. D13 functions as the Proton acceptor in the catalytic mechanism. Positions 13 and 40 each coordinate Mg(2+). IMP contacts are provided by residues 13-16 (DEGK), 38-41 (NAGH), T130, R144, Q224, T239, and R303. H41 functions as the Proton donor in the catalytic mechanism. 299-305 (TVTGRKR) is a binding site for substrate. Residues R305, 331 to 333 (KLD), and 413 to 415 (STS) each bind GTP.

Belongs to the adenylosuccinate synthetase family. In terms of assembly, homodimer. It depends on Mg(2+) as a cofactor.

It localises to the cytoplasm. It carries out the reaction IMP + L-aspartate + GTP = N(6)-(1,2-dicarboxyethyl)-AMP + GDP + phosphate + 2 H(+). Its pathway is purine metabolism; AMP biosynthesis via de novo pathway; AMP from IMP: step 1/2. Plays an important role in the de novo pathway of purine nucleotide biosynthesis. Catalyzes the first committed step in the biosynthesis of AMP from IMP. The chain is Adenylosuccinate synthetase from Cereibacter sphaeroides (strain ATCC 17029 / ATH 2.4.9) (Rhodobacter sphaeroides).